A 498-amino-acid chain; its full sequence is ATP synthase subunit beta, chloroplastic (498 aa).

Residue 172-179 (GGAGVGKT) coordinates ATP.

This sequence belongs to the ATPase alpha/beta chains family. In terms of assembly, F-type ATPases have 2 components, CF(1) - the catalytic core - and CF(0) - the membrane proton channel. CF(1) has five subunits: alpha(3), beta(3), gamma(1), delta(1), epsilon(1). CF(0) has four main subunits: a(1), b(1), b'(1) and c(9-12).

It is found in the plastid. The protein resides in the chloroplast thylakoid membrane. The catalysed reaction is ATP + H2O + 4 H(+)(in) = ADP + phosphate + 5 H(+)(out). Functionally, produces ATP from ADP in the presence of a proton gradient across the membrane. The catalytic sites are hosted primarily by the beta subunits. This chain is ATP synthase subunit beta, chloroplastic, found in Lactuca sativa (Garden lettuce).